Consider the following 121-residue polypeptide: Small ribosomal subunit protein uS13 (121 aa).

The disordered stretch occupies residues 91–121 (HRRGLPVRGQKTKNNARTRKGPVKTVANKKK).

It belongs to the universal ribosomal protein uS13 family. In terms of assembly, part of the 30S ribosomal subunit. Forms a loose heterodimer with protein S19. Forms two bridges to the 50S subunit in the 70S ribosome.

Located at the top of the head of the 30S subunit, it contacts several helices of the 16S rRNA. In the 70S ribosome it contacts the 23S rRNA (bridge B1a) and protein L5 of the 50S subunit (bridge B1b), connecting the 2 subunits; these bridges are implicated in subunit movement. Contacts the tRNAs in the A and P-sites. This Staphylococcus saprophyticus subsp. saprophyticus (strain ATCC 15305 / DSM 20229 / NCIMB 8711 / NCTC 7292 / S-41) protein is Small ribosomal subunit protein uS13.